Consider the following 380-residue polypeptide: Cytochrome b (380 aa).

4 consecutive transmembrane segments (helical) span residues 34–54 (FGSL…LLAM), 78–99 (WLIR…YLHI), 114–134 (WNTG…GYVL), and 179–199 (FFAL…IHLT). Residues His-84 and His-98 each coordinate heme b. Positions 183 and 197 each coordinate heme b. His-202 contributes to the a ubiquinone binding site. The next 4 membrane-spanning stretches (helical) occupy residues 227–247 (LKDL…ALFT), 289–309 (LGGV…PFLH), 321–341 (LSQL…WVGS), and 348–368 (FIII…VLLP).

It belongs to the cytochrome b family. As to quaternary structure, the cytochrome bc1 complex contains 11 subunits: 3 respiratory subunits (MT-CYB, CYC1 and UQCRFS1), 2 core proteins (UQCRC1 and UQCRC2) and 6 low-molecular weight proteins (UQCRH/QCR6, UQCRB/QCR7, UQCRQ/QCR8, UQCR10/QCR9, UQCR11/QCR10 and a cleavage product of UQCRFS1). This cytochrome bc1 complex then forms a dimer. Heme b is required as a cofactor.

It localises to the mitochondrion inner membrane. Its function is as follows. Component of the ubiquinol-cytochrome c reductase complex (complex III or cytochrome b-c1 complex) that is part of the mitochondrial respiratory chain. The b-c1 complex mediates electron transfer from ubiquinol to cytochrome c. Contributes to the generation of a proton gradient across the mitochondrial membrane that is then used for ATP synthesis. This Herpetotheres cachinnans (Laughing falcon) protein is Cytochrome b (MT-CYB).